Here is a 211-residue protein sequence, read N- to C-terminus: BAG family molecular chaperone regulator 2 (211 aa).

The residue at position 2 (Ala2) is an N-acetylalanine. Phosphoserine is present on residues Ser20, Ser31, and Ser73. Positions 20–61 (SMADRSSRLLESLDQLELRVEALREAATAVEQEKEILLEMIH) form a coiled coil. A BAG domain is found at 109-189 (SLKHATRIID…NIENSDKAIK (81 aa)).

As to quaternary structure, binds to the ATPase domain of HSP/HSC70 chaperones. May interact with NWD1. Interacts with HSPA1A (via NBD), HSPA1B (via NBD) and HSPA8. May interact with DNJC9; the interaction seems to be histone-dependent.

Its function is as follows. Co-chaperone for HSP70 and HSC70 chaperone proteins. Acts as a nucleotide-exchange factor (NEF) promoting the release of ADP from the HSP70 and HSC70 proteins thereby triggering client/substrate protein release. The polypeptide is BAG family molecular chaperone regulator 2 (BAG2) (Homo sapiens (Human)).